The following is a 236-amino-acid chain: GCN5-related N-acetyltransferase 8 (236 aa).

The N-acetyltransferase domain occupies 96 to 235 (ATITSSPSPD…DALEAFDQVN (140 aa)). Acetyl-CoA contacts are provided by residues 161–163 (IFV), 169–174 (RKGFGS), 200–202 (NVN), and Tyr-207. Tyr-207 acts as the Proton donor in catalysis.

The protein belongs to the acetyltransferase family. GNAT subfamily. As to quaternary structure, oligomer. In terms of tissue distribution, expressed throughout the plant.

The protein resides in the cytoplasm. It localises to the nucleus. It catalyses the reaction an N-terminal L-alpha-aminoacyl-[protein] + acetyl-CoA = N-terminal N(alpha)-acetyl-L-alpha-aminoacyl-[protein] + CoA + H(+). The catalysed reaction is L-lysyl-[protein] + acetyl-CoA = N(6)-acetyl-L-lysyl-[protein] + CoA + H(+). Probable protein acetyltransferase with dual specificity triggering both N-alpha-acetylation (NTA) and epsilon-lysine acetylation (KA). This chain is GCN5-related N-acetyltransferase 8, found in Arabidopsis thaliana (Mouse-ear cress).